The sequence spans 188 residues: MPLESIWADAPDEEPIKKQKPSHKRSNNNKKNNNSRWSNESSSNNKKKDSVNKVKNNKGNHESKTKNKIKETLPREKKPPHSQGKISPVSESLAINPFSQKATEISPPPVSPSKMKTTKTQSKQDTASKMKLLKKKIEEQREILQKTHHKNQQQQVLMDFLNDEGSSNWVDDDEEELILQRLKTSLKI.

The segment at 1-128 is disordered; that stretch reads MPLESIWADA…KTQSKQDTAS (128 aa). Residues 18–28 show a composition bias toward basic residues; the sequence is KQKPSHKRSNN. The span at 29-44 shows a compositional bias: low complexity; sequence NKKNNNSRWSNESSSN. Over residues 59-79 the composition is skewed to basic and acidic residues; it reads GNHESKTKNKIKETLPREKKP. Residues serine 87, serine 106, and serine 111 each carry the phosphoserine modification. Residues 112-128 show a composition bias toward low complexity; it reads PSKMKTTKTQSKQDTAS. Positions 119–164 form a coiled coil; that stretch reads KTQSKQDTASKMKLLKKKIEEQREILQKTHHKNQQQQVLMDFLNDE.

Interacts with GLE1, NUP42, NAB2, ZDS1 and probably DBP5. Forms a complex with GLE1 and NAB2.

The protein resides in the cytoplasm. It is found in the nucleus. The protein localises to the nuclear pore complex. It localises to the nucleus membrane. High-copy suppressor of mutant alleles of ATP-dependent RNA helicase DBP5, which is involved in mRNA export from the nucleus. It may also play an important role in a late stage of NAB2-mRNA export. This chain is mRNA transport factor GFD1 (GFD1), found in Saccharomyces cerevisiae (strain ATCC 204508 / S288c) (Baker's yeast).